A 245-amino-acid chain; its full sequence is NAD-dependent protein deacetylase (245 aa).

Residues 1 to 245 enclose the Deacetylase sirtuin-type domain; the sequence is MLLLDKINEL…SIGKVLETVI (245 aa). NAD(+)-binding residues include alanine 26, threonine 30, phenylalanine 37, arginine 38, glutamine 107, isoleucine 109, aspartate 110, and histidine 125. Phenylalanine 37 contributes to the nicotinamide binding site. 2 residues coordinate nicotinamide: isoleucine 109 and aspartate 110. Histidine 125 (proton acceptor) is an active-site residue. Residues cysteine 133, cysteine 136, cysteine 155, and cysteine 158 each coordinate Zn(2+). NAD(+) is bound by residues threonine 196, serine 197, asparagine 219, and isoleucine 237.

This sequence belongs to the sirtuin family. Class U subfamily. Requires Zn(2+) as cofactor.

It is found in the cytoplasm. The catalysed reaction is N(6)-acetyl-L-lysyl-[protein] + NAD(+) + H2O = 2''-O-acetyl-ADP-D-ribose + nicotinamide + L-lysyl-[protein]. Its function is as follows. NAD-dependent protein deacetylase which modulates the activities of several enzymes which are inactive in their acetylated form. In Clostridium acetobutylicum (strain ATCC 824 / DSM 792 / JCM 1419 / IAM 19013 / LMG 5710 / NBRC 13948 / NRRL B-527 / VKM B-1787 / 2291 / W), this protein is NAD-dependent protein deacetylase.